The following is a 279-amino-acid chain: Shikimate dehydrogenase (NADP(+)) (279 aa).

Residues 17 to 19 and T64 each bind shikimate; that span reads SLS. K68 serves as the catalytic Proton acceptor. Position 80 (D80) interacts with NADP(+). Shikimate contacts are provided by N89 and D105. NADP(+) contacts are provided by residues 129–133, 153–158, and L221; these read GAGGS and NRTAKK. A shikimate-binding site is contributed by Y223. Residue G245 participates in NADP(+) binding.

The protein belongs to the shikimate dehydrogenase family. Homodimer.

The catalysed reaction is shikimate + NADP(+) = 3-dehydroshikimate + NADPH + H(+). The protein operates within metabolic intermediate biosynthesis; chorismate biosynthesis; chorismate from D-erythrose 4-phosphate and phosphoenolpyruvate: step 4/7. Involved in the biosynthesis of the chorismate, which leads to the biosynthesis of aromatic amino acids. Catalyzes the reversible NADPH linked reduction of 3-dehydroshikimate (DHSA) to yield shikimate (SA). The protein is Shikimate dehydrogenase (NADP(+)) of Idiomarina loihiensis (strain ATCC BAA-735 / DSM 15497 / L2-TR).